Here is a 465-residue protein sequence, read N- to C-terminus: UPF0422 protein CBU_0937 (465 aa).

Residues 1-23 (MTSKLVISALGLCVSGALSTTLA) form the signal peptide. Residues 28 to 60 (TTNQQITKRIDYLQAQINELRTQQKKERQKKKA) adopt a coiled-coil conformation.

It belongs to the UPF0422 family.

This chain is UPF0422 protein CBU_0937, found in Coxiella burnetii (strain RSA 493 / Nine Mile phase I).